We begin with the raw amino-acid sequence, 131 residues long: Putative gamma-taxilin 2 (131 aa).

It belongs to the taxilin family. Ubiquitously expressed.

This is Putative gamma-taxilin 2 (TXLNGY) from Homo sapiens (Human).